Consider the following 1049-residue polypeptide: Protein phosphatase 1 regulatory subunit 12A (1049 aa).

ANK repeat units lie at residues 39–68 (DDGA…DINY), 72–101 (DGLT…CINQ), 105–134 (EGWI…SVGV), 138–164 (EGET…RQGV), 198–227 (SGGT…DVNI), and 231–260 (DGWT…DMDV). The disordered stretch occupies residues 302–947 (LIETTTTGDN…RPYSRFEKDD (646 aa)). Over residues 303 to 315 (IETTTTGDNNQSV) the composition is skewed to polar residues. Residues 319-341 (KSKETLLLEPEKTAPRIETLEPE) are compositionally biased toward basic and acidic residues. Positions 359–371 (SEEEEEEDSESEN) are enriched in acidic residues. A compositionally biased stretch (low complexity) spans 378–421 (SSVPSSVSNSTPTTAPSSITVTSPTTPSNQVTTPTSPTKKVSTP). The span at 426–436 (SPKEEDRKDES) shows a compositional bias: basic and acidic residues. A compositionally biased stretch (low complexity) spans 473–484 (RSASSPRLSSSL). Basic and acidic residues predominate over residues 485-497 (DNKDKEKEKEKTR). The segment covering 545 to 564 (SDGTASTNRTSSYQRSTSHT) has biased composition (polar residues). The span at 571 to 592 (SSSRDLPAKSSSASSLEPNNSK) shows a compositional bias: low complexity. Polar residues predominate over residues 593–607 (AWQPSSYYQSYSIHR). The span at 620-639 (SSTSSSTTTTTTTSSVTSPT) shows a compositional bias: low complexity. Residues 649–664 (WAEESAEKEKEKEKES) are compositionally biased toward basic and acidic residues. The segment covering 665-686 (ATVIPTINTAGTTTTTSTTGTV) has biased composition (low complexity). Basic and acidic residues predominate over residues 702–711 (VRDEESESQR). Residues 712–722 (KARSRQARQSR) show a composition bias toward basic residues. Basic and acidic residues predominate over residues 747–789 (RPREDEKEEKEKQDKEKQEEKKETETKEDDYRSRYRSFEEKYR). A compositionally biased stretch (low complexity) spans 790-819 (TSLASSTTASSTIPSSSSSSSSSLYSTSSL). Residues 820 to 829 (NRPNSLTGLT) are compositionally biased toward polar residues. A compositionally biased stretch (basic and acidic residues) spans 835–863 (STRDTDRESDRKEKDEDRDGDDKSQPRSI). Residues 864 to 875 (RDRRRPREKRRS) show a composition bias toward basic residues. 2 stretches are compositionally biased toward basic and acidic residues: residues 890–906 (PDHP…EPQS) and 934–947 (GESR…EKDD).

PP1 comprises a catalytic subunit, and one or several targeting or regulatory subunits. Ppp1r12a mediates binding to myosin.

The protein resides in the cytoplasm. Functionally, regulates myosin phosphatase activity. The sequence is that of Protein phosphatase 1 regulatory subunit 12A (ppp1r12a) from Danio rerio (Zebrafish).